The sequence spans 434 residues: UDP-N-acetylglucosamine 1-carboxyvinyltransferase 1 (434 aa).

22 to 23 (KN) serves as a coordination point for phosphoenolpyruvate. UDP-N-acetyl-alpha-D-glucosamine is bound at residue R93. The Proton donor role is filled by C117. At C117 the chain carries 2-(S-cysteinyl)pyruvic acid O-phosphothioketal. UDP-N-acetyl-alpha-D-glucosamine-binding positions include 122 to 126 (RPIDQ), D306, and V328.

It belongs to the EPSP synthase family. MurA subfamily.

It is found in the cytoplasm. The catalysed reaction is phosphoenolpyruvate + UDP-N-acetyl-alpha-D-glucosamine = UDP-N-acetyl-3-O-(1-carboxyvinyl)-alpha-D-glucosamine + phosphate. It functions in the pathway cell wall biogenesis; peptidoglycan biosynthesis. Cell wall formation. Adds enolpyruvyl to UDP-N-acetylglucosamine. The sequence is that of UDP-N-acetylglucosamine 1-carboxyvinyltransferase 1 from Bacillus cereus (strain ATCC 10987 / NRS 248).